Reading from the N-terminus, the 1350-residue chain is Nicotinate hydroxylase hnxS (1350 aa).

Positions 49, 54, 89, 92, 133, and 135 each coordinate [2Fe-2S] cluster. The disordered stretch occupies residues 164 to 193 (LVGTEEETESDMGAHSGSGDTGSRSSGSCG). Low complexity predominate over residues 180 to 192 (GSGDTGSRSSGSC). Residues 256-445 (YGDAEQAWVK…TKIAVPMPSK (190 aa)) form the FAD-binding PCMH-type domain. FAD-binding positions include 284-291 (LVTGASEV), 379-383 (CLAGN), D392, and K455. The Mo-molybdopterin site is built by Q793 and F824. Substrate is bound by residues E828 and R906. Mo-molybdopterin contacts are provided by R938 and A1107. The active-site Proton acceptor is the E1281.

It belongs to the xanthine dehydrogenase family. The cofactor is [2Fe-2S] cluster. It depends on FAD as a cofactor. Mo-molybdopterin is required as a cofactor.

With respect to regulation, allopurinol inhibits catalytic activity in a linear fashion. In terms of biological role, nicotinate hydroxylase, part of the hnx cluster involved in the purine degradation. The nicotinate hydroxylase hnxS accepts nicotinate as a substrate and catalyzes the first step of nicotinate catabolism. HnxS also accepts hypoxanthine, but not xanthine, as a substrate. The major facilitator-type transporters hxnP and hxnZ are probably involved in the uptake of nicotinate-derived metabolites, and the oxidoreductases hxnT and hxnY in the further metabolism of 6-OH nicotinic acid. The sequence is that of Nicotinate hydroxylase hnxS from Emericella nidulans (strain FGSC A4 / ATCC 38163 / CBS 112.46 / NRRL 194 / M139) (Aspergillus nidulans).